A 1013-amino-acid chain; its full sequence is Chitin synthase A (1013 aa).

Asn-10 carries N-linked (GlcNAc...) asparagine glycosylation. Disordered stretches follow at residues 26–83 (RYSY…AADW) and 95–218 (ERAD…RRGV). A compositionally biased stretch (low complexity) spans 64 to 81 (TASRPASPARPWSPTRAA). Polar residues predominate over residues 154–173 (TISSRHGPQGSVQSFTSEST). 2 N-linked (GlcNAc...) asparagine glycosylation sites follow: Asn-194 and Asn-316. Transmembrane regions (helical) follow at residues 646 to 666 (LLQL…FFFI), 686 to 706 (IFIV…IFSM), 721 to 741 (MIVY…LIVL), 759 to 779 (LFVN…FTSF), and 792 to 811 (AQYF…YAFC). N-linked (GlcNAc...) asparagine glycosylation occurs at Asn-837. Transmembrane regions (helical) follow at residues 892-912 (VSVW…VYGV) and 919-939 (VYLA…AIGS). Residues Asn-967, Asn-980, Asn-989, and Asn-995 are each glycosylated (N-linked (GlcNAc...) asparagine).

This sequence belongs to the chitin synthase family. Class II subfamily. In terms of tissue distribution, mainly expressed in the metulae, phialides, and conidia.

The protein localises to the cell membrane. The protein resides in the cell septum. It catalyses the reaction [(1-&gt;4)-N-acetyl-beta-D-glucosaminyl](n) + UDP-N-acetyl-alpha-D-glucosamine = [(1-&gt;4)-N-acetyl-beta-D-glucosaminyl](n+1) + UDP + H(+). Functionally, polymerizes chitin, a structural polymer of the cell wall and septum, by transferring the sugar moiety of UDP-GlcNAc to the non-reducing end of the growing chitin polymer. Seems not to be involved in hyphal growth, but, with chsC, chsA shares critical functions in hyphal wall integrity and differentiation. ChsA and chsC share also overlapping roles in septum formation. Invoved in the production of the asexual spores (conidia) that are formed by differentiated aerial hyphae called conidiophores. The protein is Chitin synthase A of Emericella nidulans (strain FGSC A4 / ATCC 38163 / CBS 112.46 / NRRL 194 / M139) (Aspergillus nidulans).